We begin with the raw amino-acid sequence, 405 residues long: Cysteine desulfurase IscS (405 aa).

Residues 75–76 (AT), Asn156, Gln184, and 204–206 (SAH) contribute to the pyridoxal 5'-phosphate site. An N6-(pyridoxal phosphate)lysine modification is found at Lys207. Thr244 provides a ligand contact to pyridoxal 5'-phosphate. The Cysteine persulfide intermediate role is filled by Cys329. Position 329 (Cys329) interacts with [2Fe-2S] cluster.

Belongs to the class-V pyridoxal-phosphate-dependent aminotransferase family. NifS/IscS subfamily. Homodimer. Forms a heterotetramer with IscU, interacts with other sulfur acceptors. It depends on pyridoxal 5'-phosphate as a cofactor.

The protein resides in the cytoplasm. The catalysed reaction is (sulfur carrier)-H + L-cysteine = (sulfur carrier)-SH + L-alanine. The protein operates within cofactor biosynthesis; iron-sulfur cluster biosynthesis. Its function is as follows. Master enzyme that delivers sulfur to a number of partners involved in Fe-S cluster assembly, tRNA modification or cofactor biosynthesis. Catalyzes the removal of elemental sulfur atoms from cysteine to produce alanine. Functions as a sulfur delivery protein for Fe-S cluster synthesis onto IscU, an Fe-S scaffold assembly protein, as well as other S acceptor proteins. This Acinetobacter baumannii (strain AB307-0294) protein is Cysteine desulfurase IscS.